We begin with the raw amino-acid sequence, 283 residues long: MRIFEKAPAKLNLGLDIKGRCDDGYHELAMIMVSIDLNDYVTISELKEDCIVIDSDSSKMPLNNDNDVFKAADIIKNQYGINKGVHIRLEKSIPVCAGLGGGSTDAAATIRALNRLWNLQMDYDEMVAIGFKIGSDVPYCLGGGCSLVLGKGEIVKPLPTLRPCWIVLVKPDFGISTKSIFRDIDCKSISRVDIDLLKSAILSSDYQLMVKSMGNSLEDITITKNPVISTIKERMLNSGADVALMTGSGPTVFSMCSTEKKADRVFNSMKGFCKEVYKVRLLR.

The active site involves Lys10. 94–104 (PVCAGLGGGST) contacts ATP. The active site involves Asp136.

This sequence belongs to the GHMP kinase family. IspE subfamily.

It catalyses the reaction 4-CDP-2-C-methyl-D-erythritol + ATP = 4-CDP-2-C-methyl-D-erythritol 2-phosphate + ADP + H(+). Its function is as follows. Catalyzes the phosphorylation of the position 2 hydroxy group of 4-diphosphocytidyl-2C-methyl-D-erythritol. The chain is Putative 4-diphosphocytidyl-2-C-methyl-D-erythritol kinase from Streptococcus agalactiae serotype III (strain NEM316).